The following is a 369-amino-acid chain: Phenylalanine--tRNA ligase alpha subunit (369 aa).

A Mg(2+)-binding site is contributed by Glu-269.

This sequence belongs to the class-II aminoacyl-tRNA synthetase family. Phe-tRNA synthetase alpha subunit type 1 subfamily. As to quaternary structure, tetramer of two alpha and two beta subunits. Mg(2+) serves as cofactor.

It is found in the cytoplasm. It carries out the reaction tRNA(Phe) + L-phenylalanine + ATP = L-phenylalanyl-tRNA(Phe) + AMP + diphosphate + H(+). This is Phenylalanine--tRNA ligase alpha subunit from Brucella canis (strain ATCC 23365 / NCTC 10854 / RM-666).